We begin with the raw amino-acid sequence, 375 residues long: Actin, cytoplasmic (375 aa).

The protein belongs to the actin family.

It is found in the cytoplasm. It localises to the cytoskeleton. The catalysed reaction is ATP + H2O = ADP + phosphate + H(+). Functionally, actins are highly conserved proteins that are involved in various types of cell motility and are ubiquitously expressed in all eukaryotic cells. The polypeptide is Actin, cytoplasmic (Oxytricha trifallax (Sterkiella histriomuscorum)).